We begin with the raw amino-acid sequence, 312 residues long: Bifunctional pinoresinol-lariciresinol reductase 2 (312 aa).

NADP(+) contacts are provided by residues 11-17, Arg36, and Lys45; that span reads GGTGYIG. Lys138 functions as the Proton acceptor in the catalytic mechanism. Arg142 contributes to the NADP(+) binding site. Position 270 (His270) interacts with substrate.

This sequence belongs to the NmrA-type oxidoreductase family. Isoflavone reductase subfamily. Dimer.

It carries out the reaction (+)-lariciresinol + NADP(+) = (+)-pinoresinol + NADPH + H(+). It catalyses the reaction (-)-secoisolariciresinol + NADP(+) = (+)-lariciresinol + NADPH + H(+). The enzyme catalyses (-)-lariciresinol + NADP(+) = (-)-pinoresinol + NADPH + H(+). In terms of biological role, reductase involved in lignan biosynthesis. Catalyzes the enantioselective sequential conversion of (+)-pinoresinol into (+)-lariciresinol and of (+)-lariciresinol into (-)-secoisolariciresinol. Can also convert with a lower efficiency (-)-pinoresinol into (-)-lariciresinol, but not (-)-lariciresinol into (+)-secoisolariciresinol. Abstracts the 4R-hydride from the NADPH cofactor during catalysis. This is Bifunctional pinoresinol-lariciresinol reductase 2 (PLR_Tp2) from Thuja plicata (Western red-cedar).